The chain runs to 254 residues: Thiazole synthase (254 aa).

The active-site Schiff-base intermediate with DXP is Lys96. Residues Gly157, 183-184 (AG), and 205-206 (NT) contribute to the 1-deoxy-D-xylulose 5-phosphate site.

Belongs to the ThiG family. Homotetramer. Forms heterodimers with either ThiH or ThiS.

The protein resides in the cytoplasm. The catalysed reaction is [ThiS sulfur-carrier protein]-C-terminal-Gly-aminoethanethioate + 2-iminoacetate + 1-deoxy-D-xylulose 5-phosphate = [ThiS sulfur-carrier protein]-C-terminal Gly-Gly + 2-[(2R,5Z)-2-carboxy-4-methylthiazol-5(2H)-ylidene]ethyl phosphate + 2 H2O + H(+). The protein operates within cofactor biosynthesis; thiamine diphosphate biosynthesis. Its function is as follows. Catalyzes the rearrangement of 1-deoxy-D-xylulose 5-phosphate (DXP) to produce the thiazole phosphate moiety of thiamine. Sulfur is provided by the thiocarboxylate moiety of the carrier protein ThiS. In vitro, sulfur can be provided by H(2)S. The protein is Thiazole synthase of Clostridium perfringens (strain SM101 / Type A).